We begin with the raw amino-acid sequence, 1545 residues long: Immunoglobulin A1 protease autotransporter (1545 aa).

The N-terminal stretch at 1–25 is a signal peptide; sequence MLNKKFKLNFIALTVAYALTPYTEA. Positions 26–336 constitute a Peptidase S6 domain; the sequence is ALVRDDVDYQ…NIYKPEFAEK (311 aa). Serine 292 is a catalytic residue. A compositionally biased stretch (polar residues) spans 995 to 1019; the sequence is TVDTTNITTPNNIQADVPSVPSNNE. The segment at 995–1246 is disordered; sequence TVDTTNITTP…NVEPATTSSN (252 aa). Low complexity predominate over residues 1036–1046; sequence TPSETTETVAE. Over residues 1048–1060 the composition is skewed to basic and acidic residues; the sequence is SKQESKTVEKNEQ. Residues 1080 to 1094 are compositionally biased toward polar residues; that stretch reads VKANTQTNEVAQSGS. A compositionally biased stretch (basic and acidic residues) spans 1095-1125; that stretch reads ETKETQTTETKETATVEKEEKAKVETEKTQE. Composition is skewed to polar residues over residues 1129–1145 and 1161–1222; these read VTSQ…TVQP and EPQS…SSNK. Residues 1293-1545 enclose the Autotransporter domain; it reads NNEGQYNVWV…TAELKLSFSF (253 aa).

The protein resides in the periplasm. It localises to the secreted. The protein localises to the cell surface. It is found in the cell outer membrane. It catalyses the reaction Cleavage of immunoglobulin A molecules at certain Pro-|-Xaa bonds in the hinge region. No small molecule substrates are known.. Functionally, virulence factor; cleaves host immunoglobulin A producing intact Fc and Fab fragments. The protein is Immunoglobulin A1 protease autotransporter (iga) of Haemophilus influenzae.